Reading from the N-terminus, the 121-residue chain is UPF0295 protein ABC1323 (121 aa).

Transmembrane regions (helical) follow at residues 14 to 34 and 41 to 61; these read TFAL…IFFK and VIAM…YFFI.

The protein belongs to the UPF0295 family.

It is found in the cell membrane. This Shouchella clausii (strain KSM-K16) (Alkalihalobacillus clausii) protein is UPF0295 protein ABC1323.